Consider the following 149-residue polypeptide: UPF0178 protein NT01CX_0440 (149 aa).

The protein belongs to the UPF0178 family.

The chain is UPF0178 protein NT01CX_0440 from Clostridium novyi (strain NT).